The sequence spans 195 residues: Xanthine phosphoribosyltransferase (195 aa).

Residues L20 and N27 each contribute to the xanthine site. 128 to 132 contributes to the 5-phospho-alpha-D-ribose 1-diphosphate binding site; it reads ANGQA. A xanthine-binding site is contributed by K156.

This sequence belongs to the purine/pyrimidine phosphoribosyltransferase family. Xpt subfamily. In terms of assembly, homodimer.

It is found in the cytoplasm. It carries out the reaction XMP + diphosphate = xanthine + 5-phospho-alpha-D-ribose 1-diphosphate. The protein operates within purine metabolism; XMP biosynthesis via salvage pathway; XMP from xanthine: step 1/1. Functionally, converts the preformed base xanthine, a product of nucleic acid breakdown, to xanthosine 5'-monophosphate (XMP), so it can be reused for RNA or DNA synthesis. The protein is Xanthine phosphoribosyltransferase of Latilactobacillus sakei subsp. sakei (strain 23K) (Lactobacillus sakei subsp. sakei).